A 294-amino-acid polypeptide reads, in one-letter code: 4-hydroxy-tetrahydrodipicolinate synthase (294 aa).

Thr44 is a pyruvate binding site. Tyr132 functions as the Proton donor/acceptor in the catalytic mechanism. The Schiff-base intermediate with substrate role is filled by Lys161. A pyruvate-binding site is contributed by Ile206.

The protein belongs to the DapA family. In terms of assembly, homotetramer; dimer of dimers.

The protein localises to the cytoplasm. The catalysed reaction is L-aspartate 4-semialdehyde + pyruvate = (2S,4S)-4-hydroxy-2,3,4,5-tetrahydrodipicolinate + H2O + H(+). It functions in the pathway amino-acid biosynthesis; L-lysine biosynthesis via DAP pathway; (S)-tetrahydrodipicolinate from L-aspartate: step 3/4. In terms of biological role, catalyzes the condensation of (S)-aspartate-beta-semialdehyde [(S)-ASA] and pyruvate to 4-hydroxy-tetrahydrodipicolinate (HTPA). This chain is 4-hydroxy-tetrahydrodipicolinate synthase, found in Thermotoga petrophila (strain ATCC BAA-488 / DSM 13995 / JCM 10881 / RKU-1).